The chain runs to 118 residues: Co-chaperonin GroES (118 aa).

It belongs to the GroES chaperonin family. In terms of assembly, heptamer of 7 subunits arranged in a ring. Interacts with the chaperonin GroEL.

Its subcellular location is the cytoplasm. Functionally, together with the chaperonin GroEL, plays an essential role in assisting protein folding. The GroEL-GroES system forms a nano-cage that allows encapsulation of the non-native substrate proteins and provides a physical environment optimized to promote and accelerate protein folding. GroES binds to the apical surface of the GroEL ring, thereby capping the opening of the GroEL channel. The protein is Co-chaperonin GroES of Helicobacter pylori (strain Shi470).